The chain runs to 509 residues: ATP synthase subunit alpha (509 aa).

169–176 (GDRQTGKT) provides a ligand contact to ATP.

Belongs to the ATPase alpha/beta chains family. In terms of assembly, F-type ATPases have 2 components, CF(1) - the catalytic core - and CF(0) - the membrane proton channel. CF(1) has five subunits: alpha(3), beta(3), gamma(1), delta(1), epsilon(1). CF(0) has three main subunits: a(1), b(2) and c(9-12). The alpha and beta chains form an alternating ring which encloses part of the gamma chain. CF(1) is attached to CF(0) by a central stalk formed by the gamma and epsilon chains, while a peripheral stalk is formed by the delta and b chains.

It is found in the cell inner membrane. The enzyme catalyses ATP + H2O + 4 H(+)(in) = ADP + phosphate + 5 H(+)(out). Its function is as follows. Produces ATP from ADP in the presence of a proton gradient across the membrane. The alpha chain is a regulatory subunit. The sequence is that of ATP synthase subunit alpha from Rhizobium leguminosarum bv. trifolii (strain WSM2304).